We begin with the raw amino-acid sequence, 145 residues long: Ribosomal RNA large subunit methyltransferase H (145 aa).

Residues Gly94 and 113-118 (LSPLTF) each bind S-adenosyl-L-methionine.

Belongs to the RNA methyltransferase RlmH family. As to quaternary structure, homodimer.

It is found in the cytoplasm. The catalysed reaction is pseudouridine(1915) in 23S rRNA + S-adenosyl-L-methionine = N(3)-methylpseudouridine(1915) in 23S rRNA + S-adenosyl-L-homocysteine + H(+). In terms of biological role, specifically methylates the pseudouridine at position 1915 (m3Psi1915) in 23S rRNA. The protein is Ribosomal RNA large subunit methyltransferase H of Sorangium cellulosum (strain So ce56) (Polyangium cellulosum (strain So ce56)).